Reading from the N-terminus, the 174-residue chain is Endoribonuclease YbeY (174 aa).

Residues His-129, His-133, and His-139 each coordinate Zn(2+).

Belongs to the endoribonuclease YbeY family. It depends on Zn(2+) as a cofactor.

It is found in the cytoplasm. In terms of biological role, single strand-specific metallo-endoribonuclease involved in late-stage 70S ribosome quality control and in maturation of the 3' terminus of the 16S rRNA. In Lactobacillus helveticus (strain DPC 4571), this protein is Endoribonuclease YbeY.